A 56-amino-acid polypeptide reads, in one-letter code: Large ribosomal subunit protein bL33A (56 aa).

This sequence belongs to the bacterial ribosomal protein bL33 family.

The protein is Large ribosomal subunit protein bL33A of Sorangium cellulosum (strain So ce56) (Polyangium cellulosum (strain So ce56)).